The chain runs to 356 residues: Histidinol-phosphate aminotransferase (356 aa).

Lys-208 bears the N6-(pyridoxal phosphate)lysine mark.

This sequence belongs to the class-II pyridoxal-phosphate-dependent aminotransferase family. Histidinol-phosphate aminotransferase subfamily. As to quaternary structure, homodimer. It depends on pyridoxal 5'-phosphate as a cofactor.

The catalysed reaction is L-histidinol phosphate + 2-oxoglutarate = 3-(imidazol-4-yl)-2-oxopropyl phosphate + L-glutamate. The protein operates within amino-acid biosynthesis; L-histidine biosynthesis; L-histidine from 5-phospho-alpha-D-ribose 1-diphosphate: step 7/9. This Lactococcus lactis subsp. cremoris (strain MG1363) protein is Histidinol-phosphate aminotransferase.